Here is a 152-residue protein sequence, read N- to C-terminus: UPF0336 protein Tfu_2666 (152 aa).

The MaoC-like domain maps to 7–116; it reads YLGRAYELPE…TTITDIKSLA (110 aa).

It belongs to the UPF0336 family.

The protein is UPF0336 protein Tfu_2666 of Thermobifida fusca (strain YX).